Here is a 142-residue protein sequence, read N- to C-terminus: Alpha-lactalbumin (142 aa).

Residues 1–19 form the signal peptide; that stretch reads MMSFVSLLLVGILFHATQA. Positions 20 to 142 constitute a C-type lysozyme domain; that stretch reads EQLTKCEVFR…KLDQWLCEKL (123 aa). 4 disulfides stabilise this stretch: C25–C139, C47–C130, C80–C96, and C92–C110. N64 and N93 each carry an N-linked (GlcNAc...) asparagine glycan. Ca(2+)-binding residues include K98, D101, D103, D106, and D107.

The protein belongs to the glycosyl hydrolase 22 family. As to quaternary structure, lactose synthase (LS) is a heterodimer of a catalytic component, beta1,4-galactosyltransferase (beta4Gal-T1) and a regulatory component, alpha-lactalbumin (LA). In terms of tissue distribution, mammary gland specific. Secreted in milk.

The protein localises to the secreted. Its function is as follows. Regulatory subunit of lactose synthase, changes the substrate specificity of galactosyltransferase in the mammary gland making glucose a good acceptor substrate for this enzyme. This enables LS to synthesize lactose, the major carbohydrate component of milk. In other tissues, galactosyltransferase transfers galactose onto the N-acetylglucosamine of the oligosaccharide chains in glycoproteins. The polypeptide is Alpha-lactalbumin (LALBA) (Bos mutus grunniens (Wild yak)).